The primary structure comprises 101 residues: Putative pterin-4-alpha-carbinolamine dehydratase (101 aa).

This sequence belongs to the pterin-4-alpha-carbinolamine dehydratase family.

The enzyme catalyses (4aS,6R)-4a-hydroxy-L-erythro-5,6,7,8-tetrahydrobiopterin = (6R)-L-erythro-6,7-dihydrobiopterin + H2O. This Rhodopseudomonas palustris (strain BisB18) protein is Putative pterin-4-alpha-carbinolamine dehydratase.